We begin with the raw amino-acid sequence, 339 residues long: MWSDLLQQLLDRQALTQEQAAQLMQGWLAEEIPDALSGAILTALQLKGLTVEELTGMANVLLAQSAGAPLNLAEPLIDTCGTGGDRAGTFNISTAVAFVVAAAGVKVAKHGNRSVSSRVGSADVLETLGVNLAHSDPAFLLKEVGITFLFAPGWHPAMKAVAPLRRTLKTRTVFNLLGPLVNPLYPTGQVIGIFSDRYLEAVAGTLQRLGRQRGIVLYGREGVDEATLGNMTDLVMFSGPEESLRQEVLDPQALGLASAPLRDLAGGDLQTNAAILTHVLQGKGTSAQQNVVALNAALALYVAAAVENWWEGVDRAKAILASGAAWDKLQALVTLSNES.

5-phospho-alpha-D-ribose 1-diphosphate contacts are provided by residues Gly-81, 84–85 (GD), Thr-89, 91–94 (NIST), 109–117 (KHGNRSVSS), and Ser-121. Residue Gly-81 coordinates anthranilate. Ser-93 is a Mg(2+) binding site. Asn-112 is a binding site for anthranilate. Arg-165 is a binding site for anthranilate. Asp-224 and Glu-225 together coordinate Mg(2+).

Belongs to the anthranilate phosphoribosyltransferase family. As to quaternary structure, homodimer. Mg(2+) serves as cofactor.

It carries out the reaction N-(5-phospho-beta-D-ribosyl)anthranilate + diphosphate = 5-phospho-alpha-D-ribose 1-diphosphate + anthranilate. It participates in amino-acid biosynthesis; L-tryptophan biosynthesis; L-tryptophan from chorismate: step 2/5. Functionally, catalyzes the transfer of the phosphoribosyl group of 5-phosphorylribose-1-pyrophosphate (PRPP) to anthranilate to yield N-(5'-phosphoribosyl)-anthranilate (PRA). This Thermosynechococcus vestitus (strain NIES-2133 / IAM M-273 / BP-1) protein is Anthranilate phosphoribosyltransferase.